Consider the following 457-residue polypeptide: ATP synthase subunit beta (457 aa).

147 to 154 lines the ATP pocket; it reads GGAGVGKT.

It belongs to the ATPase alpha/beta chains family. In terms of assembly, F-type ATPases have 2 components, CF(1) - the catalytic core - and CF(0) - the membrane proton channel. CF(1) has five subunits: alpha(3), beta(3), gamma(1), delta(1), epsilon(1). CF(0) has three main subunits: a(1), b(2) and c(9-12). The alpha and beta chains form an alternating ring which encloses part of the gamma chain. CF(1) is attached to CF(0) by a central stalk formed by the gamma and epsilon chains, while a peripheral stalk is formed by the delta and b chains.

The protein localises to the cell inner membrane. The enzyme catalyses ATP + H2O + 4 H(+)(in) = ADP + phosphate + 5 H(+)(out). In terms of biological role, produces ATP from ADP in the presence of a proton gradient across the membrane. The catalytic sites are hosted primarily by the beta subunits. The chain is ATP synthase subunit beta from Glaesserella parasuis serovar 5 (strain SH0165) (Haemophilus parasuis).